Reading from the N-terminus, the 412-residue chain is uncharacterized protein (412 aa).

The N-terminal stretch at 1–21 (MIIPMLRILLIVLFVLNLVTS) is a signal peptide. Disordered stretches follow at residues 85-134 (QPPA…STTT), 250-294 (STTE…TPGT), and 327-357 (VELGEGDDDEENDDDSSEEEETKPPARHVRE). Residues 88 to 105 (ASLTSLPAAPPSAQVAPP) are compositionally biased toward low complexity. Residues 124–134 (TPQASISSTTT) show a composition bias toward polar residues. Composition is skewed to low complexity over residues 250-259 (STTENTTEQS) and 266-293 (TTSTYSTTTTAPVNTTSAPTTTHLGTPG). A compositionally biased stretch (acidic residues) spans 330–347 (GEGDDDEENDDDSSEEEE). Basic and acidic residues predominate over residues 348–357 (TKPPARHVRE). The ShKT domain occupies 371–408 (CDEEEDDKGKICKLWAAGGLCGTHKPTMFLFCRKTCLC).

This is an uncharacterized protein from Caenorhabditis elegans.